Reading from the N-terminus, the 55-residue chain is Large ribosomal subunit protein bL33 (55 aa).

The protein belongs to the bacterial ribosomal protein bL33 family.

In Paraburkholderia phytofirmans (strain DSM 17436 / LMG 22146 / PsJN) (Burkholderia phytofirmans), this protein is Large ribosomal subunit protein bL33.